Here is a 450-residue protein sequence, read N- to C-terminus: NADH-quinone oxidoreductase subunit H (450 aa).

Helical transmembrane passes span 18 to 38 (WWLV…TPLL), 91 to 111 (ILAP…IPFG), 128 to 148 (LPVA…GIVL), 169 to 189 (VISY…DAGT), 201 to 221 (HTWY…SMVG), 262 to 282 (VTVS…PFPL), 292 to 312 (WWPV…FVWL), 324 to 344 (FMGL…MIVA), and 358 to 378 (SIAL…LLWK). Residues 387–450 (APEKPVEPRG…TGPTQENSDD (64 aa)) form a disordered region. Basic and acidic residues predominate over residues 390–400 (KPVEPRGRAEL). Residues 433–450 (VSVTGAHSTGPTQENSDD) show a composition bias toward polar residues.

The protein belongs to the complex I subunit 1 family. NDH-1 is composed of 14 different subunits. Subunits NuoA, H, J, K, L, M, N constitute the membrane sector of the complex.

Its subcellular location is the cell membrane. It carries out the reaction a quinone + NADH + 5 H(+)(in) = a quinol + NAD(+) + 4 H(+)(out). In terms of biological role, NDH-1 shuttles electrons from NADH, via FMN and iron-sulfur (Fe-S) centers, to quinones in the respiratory chain. The immediate electron acceptor for the enzyme in this species is believed to be ubiquinone. Couples the redox reaction to proton translocation (for every two electrons transferred, four hydrogen ions are translocated across the cytoplasmic membrane), and thus conserves the redox energy in a proton gradient. This subunit may bind ubiquinone. The chain is NADH-quinone oxidoreductase subunit H from Rhodococcus jostii (strain RHA1).